Reading from the N-terminus, the 570-residue chain is Putative diflavin flavoprotein A 6 (570 aa).

The interval 38–231 is zinc metallo-hydrolase; that stretch reads AKGTTANSYL…FPTRLYATGH (194 aa). The Flavodoxin-like domain occupies 260–402; the sequence is VALIYASAYG…AGTDFAQALK (143 aa). The segment at 421 to 570 is flavodoxin-reductase-like; it reads VGRIVGSLCV…VHHRKSGNHY (150 aa).

This sequence in the N-terminal section; belongs to the zinc metallo-hydrolase group 3 family. It in the C-terminal section; belongs to the flavodoxin reductase family. Fe cation serves as cofactor.

Mediates electron transfer from NADH to oxygen, reducing it to water. This modular protein has 3 redox cofactors, in other organisms the same activity requires 2 or 3 proteins. The chain is Putative diflavin flavoprotein A 6 (dfa6) from Nostoc sp. (strain PCC 7120 / SAG 25.82 / UTEX 2576).